The primary structure comprises 146 residues: Acidic phospholipase A2 D (146 aa).

The first 21 residues, 1–21 (MNPAHLLILAAVCVSPLGASS), serve as a signal peptide directing secretion. The propeptide occupies 22 to 27 (NRPMPL). 7 disulfide bridges follow: Cys-38-Cys-98, Cys-53-Cys-145, Cys-55-Cys-71, Cys-70-Cys-126, Cys-77-Cys-119, Cys-87-Cys-112, and Cys-105-Cys-117. Ca(2+)-binding residues include Tyr-54, Gly-56, and Gly-58. His-74 is an active-site residue. Asp-75 is a Ca(2+) binding site. Residue Asp-120 is part of the active site.

It belongs to the phospholipase A2 family. Group I subfamily. D49 sub-subfamily. Requires Ca(2+) as cofactor. In terms of tissue distribution, expressed by the venom gland.

The protein resides in the secreted. It carries out the reaction a 1,2-diacyl-sn-glycero-3-phosphocholine + H2O = a 1-acyl-sn-glycero-3-phosphocholine + a fatty acid + H(+). Its function is as follows. PLA2 catalyzes the calcium-dependent hydrolysis of the 2-acyl groups in 3-sn-phosphoglycerides. The polypeptide is Acidic phospholipase A2 D (Naja sputatrix (Malayan spitting cobra)).